A 475-amino-acid polypeptide reads, in one-letter code: Serralysin G (475 aa).

Positions 1–14 (MALYGKKTDLSSAS) are excised as a propeptide. Residue H186 coordinates Zn(2+). The active site involves E187. Zn(2+) is bound by residues H190 and Y226. The Ca(2+) site is built by R261, G263, T265, D293, G295, G296, D298, E337, G342, G344, D346, N351, N355, G359, G360, A361, G362, D364, G368, G370, G371, D373, G377, G378, A379, G380, D382, D391, D398, and D408. 2 Hemolysin-type calcium-binding repeats span residues 340 to 357 (IGGS…DNRI) and 358 to 375 (DGGA…ADIL).

This sequence belongs to the peptidase M10B family. The cofactor is Ca(2+). Requires Zn(2+) as cofactor.

It is found in the secreted. The enzyme catalyses Preferential cleavage of bonds with hydrophobic residues in P1'.. This chain is Serralysin G (prtG), found in Dickeya chrysanthemi (Pectobacterium chrysanthemi).